Reading from the N-terminus, the 670-residue chain is Leiomodin-3 (670 aa).

4 disordered regions span residues 34-72, 94-120, 139-165, and 202-274; these read EMDD…EEID, EIAP…GSFD, EEER…EDKV, and EDKV…NWVP. Composition is skewed to basic and acidic residues over residues 40–63, 97–112, 153–163, 205–214, and 249–261; these read PDER…RDCT, PDER…DQTD, TNEEHEAKNED, VCDKPVKTDL, and TETK…KEDS. A coiled-coil region spans residues 150–183; the sequence is SQKTNEEHEAKNEDKVEELELVYEEIVEEVEGGQ. Residues 464–494 are a coiled coil; the sequence is DRQRQQRMEEQKLQQMKEQRKVMEMYEDSLN. The segment at 517-556 is disordered; that stretch reads NGAEDIPEDSPEPSPQPSPPHQLCKTQHLAPQQHPPNLST. In terms of domain architecture, WH2 spans 637-656; that stretch reads PRDHLLSEIRQSNVAYLKAV.

This sequence belongs to the tropomodulin family. Expressed in muscle (at protein level).

The protein resides in the cytoplasm. It is found in the myofibril. Its subcellular location is the sarcomere. It localises to the a band. The protein localises to the m line. The protein resides in the cytoskeleton. Its function is as follows. Essential for the organization of sarcomeric thin filaments in skeletal muscle. The chain is Leiomodin-3 from Danio rerio (Zebrafish).